The following is a 101-amino-acid chain: ATP synthase subunit c (101 aa).

Helical transmembrane passes span Ala-31–Gln-51 and Ala-81–Gly-101.

This sequence belongs to the ATPase C chain family. As to quaternary structure, F-type ATPases have 2 components, F(1) - the catalytic core - and F(0) - the membrane proton channel. F(1) has five subunits: alpha(3), beta(3), gamma(1), delta(1), epsilon(1). F(0) has three main subunits: a(1), b(2) and c(10-14). The alpha and beta chains form an alternating ring which encloses part of the gamma chain. F(1) is attached to F(0) by a central stalk formed by the gamma and epsilon chains, while a peripheral stalk is formed by the delta and b chains.

It localises to the cell membrane. Its function is as follows. F(1)F(0) ATP synthase produces ATP from ADP in the presence of a proton or sodium gradient. F-type ATPases consist of two structural domains, F(1) containing the extramembraneous catalytic core and F(0) containing the membrane proton channel, linked together by a central stalk and a peripheral stalk. During catalysis, ATP synthesis in the catalytic domain of F(1) is coupled via a rotary mechanism of the central stalk subunits to proton translocation. In terms of biological role, key component of the F(0) channel; it plays a direct role in translocation across the membrane. A homomeric c-ring of between 10-14 subunits forms the central stalk rotor element with the F(1) delta and epsilon subunits. This is ATP synthase subunit c from Mesomycoplasma hyopneumoniae (strain J / ATCC 25934 / NCTC 10110) (Mycoplasma hyopneumoniae).